We begin with the raw amino-acid sequence, 393 residues long: S-adenosylmethionine synthase 2 (393 aa).

Residue E9 coordinates Mg(2+). H15 contributes to the ATP binding site. E43 contributes to the K(+) binding site. 2 residues coordinate L-methionine: E56 and Q99. Residues 167–169, 235–238, D246, 252–253, A269, K273, and K277 each bind ATP; these read DGK, SGRF, and RK. D246 contacts L-methionine. K277 contributes to the L-methionine binding site.

It belongs to the AdoMet synthase family. Homotetramer. The cofactor is Mn(2+). It depends on Mg(2+) as a cofactor. Co(2+) is required as a cofactor. K(+) serves as cofactor.

The protein localises to the cytoplasm. It carries out the reaction L-methionine + ATP + H2O = S-adenosyl-L-methionine + phosphate + diphosphate. It functions in the pathway amino-acid biosynthesis; S-adenosyl-L-methionine biosynthesis; S-adenosyl-L-methionine from L-methionine: step 1/1. Catalyzes the formation of S-adenosylmethionine from methionine and ATP. The reaction comprises two steps that are both catalyzed by the same enzyme: formation of S-adenosylmethionine (AdoMet) and triphosphate, and subsequent hydrolysis of the triphosphate. The protein is S-adenosylmethionine synthase 2 (METK2) of Vitis vinifera (Grape).